We begin with the raw amino-acid sequence, 316 residues long: Putative HTH-type transcriptional regulatory protein PYRAB03670 (316 aa).

One can recognise an HTH cro/C1-type domain in the interval leucine 131–leucine 189. Positions leucine 142–lysine 161 form a DNA-binding region, H-T-H motif.

The polypeptide is Putative HTH-type transcriptional regulatory protein PYRAB03670 (Pyrococcus abyssi (strain GE5 / Orsay)).